We begin with the raw amino-acid sequence, 187 residues long: Photosystem I assembly protein Ycf4 (187 aa).

2 helical membrane-spanning segments follow: residues 21-43 and 69-91; these read LSNY…AGIS and LLYG…WNVG.

It belongs to the Ycf4 family.

It localises to the plastid. The protein resides in the cyanelle thylakoid membrane. Functionally, seems to be required for the assembly of the photosystem I complex. This chain is Photosystem I assembly protein Ycf4, found in Cyanophora paradoxa.